The following is a 779-amino-acid chain: Endonuclease MutS2 (779 aa).

ATP is bound at residue 328–335; the sequence is GPNTGGKT. The Smr domain maps to 704-779; that stretch reads LDLRGKRYEE…GSGATIVTLG (76 aa).

Belongs to the DNA mismatch repair MutS family. MutS2 subfamily. Homodimer. Binds to stalled ribosomes, contacting rRNA.

Its function is as follows. Endonuclease that is involved in the suppression of homologous recombination and thus may have a key role in the control of bacterial genetic diversity. In terms of biological role, acts as a ribosome collision sensor, splitting the ribosome into its 2 subunits. Detects stalled/collided 70S ribosomes which it binds and splits by an ATP-hydrolysis driven conformational change. Acts upstream of the ribosome quality control system (RQC), a ribosome-associated complex that mediates the extraction of incompletely synthesized nascent chains from stalled ribosomes and their subsequent degradation. Probably generates substrates for RQC. This chain is Endonuclease MutS2, found in Streptococcus pyogenes serotype M5 (strain Manfredo).